The primary structure comprises 208 residues: Small ribosomal subunit protein eS8 (208 aa).

The interval 1–27 (MGISRDNWHKRRKTGGKRKPYHKKRKY) is disordered. Glycine 2 carries the N-myristoyl glycine lipid modification. The span at 8–26 (WHKRRKTGGKRKPYHKKRK) shows a compositional bias: basic residues. Lysine 37 and lysine 128 each carry N6-acetyllysine. Phosphothreonine is present on threonine 130. Serine 160 bears the Phosphoserine mark. Residues lysine 170 and lysine 193 each participate in a glycyl lysine isopeptide (Lys-Gly) (interchain with G-Cter in SUMO2) cross-link.

The protein belongs to the eukaryotic ribosomal protein eS8 family. As to quaternary structure, component of the small ribosomal subunit. Identified in a IGF2BP1-dependent mRNP granule complex containing untranslated mRNAs. Part of the small subunit (SSU) processome, composed of more than 70 proteins and the RNA chaperone small nucleolar RNA (snoRNA) U3.

It is found in the cytoplasm. It localises to the membrane. The protein resides in the nucleus. Its subcellular location is the nucleolus. Component of the small ribosomal subunit. The ribosome is a large ribonucleoprotein complex responsible for the synthesis of proteins in the cell. Part of the small subunit (SSU) processome, first precursor of the small eukaryotic ribosomal subunit. During the assembly of the SSU processome in the nucleolus, many ribosome biogenesis factors, an RNA chaperone and ribosomal proteins associate with the nascent pre-rRNA and work in concert to generate RNA folding, modifications, rearrangements and cleavage as well as targeted degradation of pre-ribosomal RNA by the RNA exosome. This chain is Small ribosomal subunit protein eS8 (RPS8), found in Oryctolagus cuniculus (Rabbit).